The sequence spans 145 residues: Transcriptional regulator SlyA (145 aa).

Residues 2–135 enclose the HTH marR-type domain; sequence ELPLGSDLAR…LALLVARLEK (134 aa). The segment at residues 49–72 is a DNA-binding region (H-T-H motif); sequence QIQLAKAIGIEQPSLVRTLDQLEE.

The protein belongs to the SlyA family. As to quaternary structure, homodimer.

Its function is as follows. Transcription regulator that can specifically activate or repress expression of target genes. The chain is Transcriptional regulator SlyA from Pectobacterium carotovorum subsp. carotovorum (strain PC1).